A 168-amino-acid polypeptide reads, in one-letter code: Photosystem I assembly protein Ycf3 (168 aa).

TPR repeat units lie at residues 29–62 (AFSY…EEDP), 66–99 (SYTL…NANL), and 117–150 (AQSL…APDN).

Belongs to the Ycf3 family.

It is found in the plastid. The protein localises to the chloroplast thylakoid membrane. Functionally, essential for the assembly of the photosystem I (PSI) complex. May act as a chaperone-like factor to guide the assembly of the PSI subunits. This Phaeodactylum tricornutum (strain CCAP 1055/1) protein is Photosystem I assembly protein Ycf3.